We begin with the raw amino-acid sequence, 312 residues long: 1-(5-phosphoribosyl)-5-[(5-phosphoribosylamino)methylideneamino] imidazole-4-carboxamide isomerase HISN3, chloroplastic (312 aa).

A chloroplast-targeting transit peptide spans 1–67; it reads MRSPASTPSI…IHKGKVKQIV (67 aa). Asp-57 contacts 1-(5-phospho-beta-D-ribosyl)-5-[(5-phospho-beta-D-ribosylamino)methylideneamino]imidazole-4-carboxamide. A 5-[(5-phospho-1-deoxy-D-ribulos-1-ylimino)methylamino]-1-(5-phospho-beta-D-ribosyl)imidazole-4-carboxamide-binding site is contributed by Gln-65. Na(+)-binding residues include Gln-65 and Ile-66. Gly-68 is a binding site for 1-(5-phospho-beta-D-ribosyl)-5-[(5-phospho-beta-D-ribosylamino)methylideneamino]imidazole-4-carboxamide. Positions 108, 138, 158, and 159 each coordinate 5-[(5-phospho-1-deoxy-D-ribulos-1-ylimino)methylamino]-1-(5-phospho-beta-D-ribosyl)imidazole-4-carboxamide. 1-(5-phospho-beta-D-ribosyl)-5-[(5-phospho-beta-D-ribosylamino)methylideneamino]imidazole-4-carboxamide contacts are provided by Gly-138, Thr-158, and Ser-159. Na(+) is bound by residues Ser-159 and Phe-162. Residues Asp-187, Arg-203, Trp-204, and His-230 each coordinate 1-(5-phospho-beta-D-ribosyl)-5-[(5-phospho-beta-D-ribosylamino)methylideneamino]imidazole-4-carboxamide. Asp-187 provides a ligand contact to 5-[(5-phospho-1-deoxy-D-ribulos-1-ylimino)methylamino]-1-(5-phospho-beta-D-ribosyl)imidazole-4-carboxamide. Residue Trp-204 participates in 5-[(5-phospho-1-deoxy-D-ribulos-1-ylimino)methylamino]-1-(5-phospho-beta-D-ribosyl)imidazole-4-carboxamide binding. Glu-235 is a binding site for Na(+). Residues Gly-236, Gly-262, Gly-285, and Ser-286 each coordinate 1-(5-phospho-beta-D-ribosyl)-5-[(5-phospho-beta-D-ribosylamino)methylideneamino]imidazole-4-carboxamide. The 5-[(5-phospho-1-deoxy-D-ribulos-1-ylimino)methylamino]-1-(5-phospho-beta-D-ribosyl)imidazole-4-carboxamide site is built by Gly-236, Gly-262, Gly-285, and Ser-286.

Belongs to the HisA/HisF family. It depends on Na(+) as a cofactor.

The protein localises to the plastid. The protein resides in the chloroplast. It carries out the reaction 1-(5-phospho-beta-D-ribosyl)-5-[(5-phospho-beta-D-ribosylamino)methylideneamino]imidazole-4-carboxamide = 5-[(5-phospho-1-deoxy-D-ribulos-1-ylimino)methylamino]-1-(5-phospho-beta-D-ribosyl)imidazole-4-carboxamide. It participates in amino-acid biosynthesis; L-histidine biosynthesis; L-histidine from 5-phospho-alpha-D-ribose 1-diphosphate: step 4/9. Its function is as follows. Component of the histidine biosynthesis pathway that catalyzes the isomerization of 5'-ProFAR (pro-phosphoribosyl formimino-5-aminoimidazole-4-carboxamide ribonucleotide, referred as 1-(5-phospho-beta-D-ribosyl)-5-[(5-phospho-beta-D-ribosylamino)methylideneamino]imidazole-4-carboxamide) to PrFAR (phosphoribulosyl formimino-5-aminoimidazole-4-carboxamide ribonucleotide, referred as 5-[(5-phospho-1-deoxy-D-ribulos-1-ylimino)methylamino]-1-(5-phospho-beta-D-ribosyl)imidazole-4-carboxamide). This is 1-(5-phosphoribosyl)-5-[(5-phosphoribosylamino)methylideneamino] imidazole-4-carboxamide isomerase HISN3, chloroplastic from Medicago truncatula (Barrel medic).